A 416-amino-acid polypeptide reads, in one-letter code: 3-isopropylmalate dehydratase large subunit (416 aa).

Positions 297, 357, and 360 each coordinate [4Fe-4S] cluster.

Belongs to the aconitase/IPM isomerase family. LeuC type 2 subfamily. In terms of assembly, heterodimer of LeuC and LeuD. It depends on [4Fe-4S] cluster as a cofactor.

The catalysed reaction is (2R,3S)-3-isopropylmalate = (2S)-2-isopropylmalate. The protein operates within amino-acid biosynthesis; L-leucine biosynthesis; L-leucine from 3-methyl-2-oxobutanoate: step 2/4. Its function is as follows. Catalyzes the isomerization between 2-isopropylmalate and 3-isopropylmalate, via the formation of 2-isopropylmaleate. This is 3-isopropylmalate dehydratase large subunit from Methanoregula boonei (strain DSM 21154 / JCM 14090 / 6A8).